Here is a 224-residue protein sequence, read N- to C-terminus: Elongation factor 1-beta (224 aa).

This sequence belongs to the EF-1-beta/EF-1-delta family. In terms of assembly, EF-1 is composed of 4 subunits: alpha, beta (1B-alpha=beta'), delta (1B-beta), and gamma (1B-gamma).

Functionally, EF-1-beta and EF-1-beta' stimulate the exchange of GDP bound to EF-1-alpha to GTP. This is Elongation factor 1-beta from Oryza sativa subsp. japonica (Rice).